The following is a 488-amino-acid chain: Glutamate--tRNA ligase (488 aa).

The 'HIGH' region signature appears at 9–19; that stretch reads PSPTGFLHIGG. The Zn(2+) site is built by cysteine 112, cysteine 114, cysteine 139, and histidine 141. The short motif at 256–260 is the 'KMSKS' region element; the sequence is KLSKR. Lysine 259 contacts ATP.

Belongs to the class-I aminoacyl-tRNA synthetase family. Glutamate--tRNA ligase type 1 subfamily. Monomer. Zn(2+) is required as a cofactor.

It is found in the cytoplasm. It catalyses the reaction tRNA(Glu) + L-glutamate + ATP = L-glutamyl-tRNA(Glu) + AMP + diphosphate. Its function is as follows. Catalyzes the attachment of glutamate to tRNA(Glu) in a two-step reaction: glutamate is first activated by ATP to form Glu-AMP and then transferred to the acceptor end of tRNA(Glu). This Elusimicrobium minutum (strain Pei191) protein is Glutamate--tRNA ligase.